The chain runs to 1181 residues: Integrin alpha-2 (1181 aa).

Positions 1 to 29 (MGPERTGAAPLPLLLVLALSQGILNCCLA) are cleaved as a signal peptide. Over 30 to 1132 (YNVGLPEAKI…KPDEKAEVPT (1103 aa)) the chain is Extracellular. FG-GAP repeat units lie at residues 34–92 (LPEA…TATC) and 101–161 (TSIP…LSAS). A disulfide bond links C83 and C92. N105, N112, and N343 each carry an N-linked (GlcNAc...) asparagine glycan. Positions 188-365 (WDAVKNFLEK…TLGEQIFSIE (178 aa)) constitute a VWFA domain. 5 FG-GAP repeats span residues 366–420 (GTVQ…LIFP), 423–475 (AFDQ…ENGN), 477–539 (TVIQ…ILGQ), 540–598 (HQFL…TIRT), and 602–664 (QKIL…FTPE). N-linked (GlcNAc...) asparagine glycans are attached at residues N432, N460, and N475. 12 residues coordinate Ca(2+): D499, D501, D503, D507, D563, N565, D567, D571, D627, N629, D631, and D635. Intrachain disulfides connect C680-C737, C789-C795, C865-C876, C1019-C1050, and C1055-C1060. N-linked (GlcNAc...) asparagine glycosylation is present at N699. N-linked (GlcNAc...) asparagine glycosylation is found at N1057, N1074, and N1081. The helical transmembrane segment at 1133–1154 (GVIIGSIIAGILLLLALVAILW) threads the bilayer. An interaction with HPS5 region spans residues 1155–1161 (KLGFFKR). Residues 1155 to 1181 (KLGFFKRKYEKMTKNPDEIDETTELSS) are Cytoplasmic-facing. The GFFKR motif signature appears at 1157–1161 (GFFKR).

Belongs to the integrin alpha chain family. In terms of assembly, heterodimer of an alpha and a beta subunit. Alpha-2 associates with beta-1. Interacts with HPS5 and RAB21. (Microbial infection) Integrin ITGA2:ITGB1 interacts (via ITAG2 I-domain) with rotavirus A VP4 protein. As to quaternary structure, (Microbial infection) Integrin ITGA2:ITGB1 interacts with human echoviruses 1 and 8 capsid proteins.

Its subcellular location is the membrane. Integrin alpha-2/beta-1 is a receptor for laminin, collagen, collagen C-propeptides, fibronectin and E-cadherin. It recognizes the proline-hydroxylated sequence G-F-P-G-E-R in collagen. It is responsible for adhesion of platelets and other cells to collagens, modulation of collagen and collagenase gene expression, force generation and organization of newly synthesized extracellular matrix. Its function is as follows. (Microbial infection) Integrin ITGA2:ITGB1 acts as a receptor for Human rotavirus A. In terms of biological role, (Microbial infection) Integrin ITGA2:ITGB1 acts as a receptor for Human echoviruses 1 and 8. This Homo sapiens (Human) protein is Integrin alpha-2 (ITGA2).